Reading from the N-terminus, the 483-residue chain is Xylulose kinase (483 aa).

Position 79-80 (79-80) interacts with substrate; that stretch reads MH.

This sequence belongs to the FGGY kinase family.

It catalyses the reaction D-xylulose + ATP = D-xylulose 5-phosphate + ADP + H(+). Functionally, catalyzes the phosphorylation of D-xylulose to D-xylulose 5-phosphate. The polypeptide is Xylulose kinase (Staphylococcus xylosus).